Reading from the N-terminus, the 181-residue chain is Transmembrane protein 154 (181 aa).

A signal peptide spans 1–22; that stretch reads MTVPCAALVLALGLAFGQSSQG. Residues 19-47 are disordered; the sequence is SSQGNDEESEYSGQSITEEENSEDETTRS. Over 23–74 the chain is Extracellular; sequence NDEESEYSGQSITEEENSEDETTRSALATVTTEALAENVNSTHTNDTSNQVE. Residues 75–95 form a helical membrane-spanning segment; sequence FILMVAIPLAALLILLFMVLI. Residues 96–181 lie on the Cytoplasmic side of the membrane; sequence ATYFKSKRPK…PNPSPSDNES (86 aa). A disordered region spans residues 103 to 122; it reads RPKQEPSSQGSQSALQTHEL. The segment covering 107 to 118 has biased composition (polar residues); sequence EPSSQGSQSALQ. The residue at position 160 (Tyr160) is a Phosphotyrosine. The tract at residues 161 to 181 is disordered; sequence ECLPTLKEEKEPNPSPSDNES. Ser177 carries the phosphoserine modification.

The protein localises to the membrane. The protein is Transmembrane protein 154 (Tmem154) of Mus musculus (Mouse).